The primary structure comprises 320 residues: Lipoyl synthase (320 aa).

7 residues coordinate [4Fe-4S] cluster: Cys-67, Cys-72, Cys-78, Cys-93, Cys-97, Cys-100, and Ser-307. One can recognise a Radical SAM core domain in the interval 79-296 (FNHGTATFMI…GVIAKEIGFT (218 aa)).

Belongs to the radical SAM superfamily. Lipoyl synthase family. The cofactor is [4Fe-4S] cluster.

The protein localises to the cytoplasm. It catalyses the reaction [[Fe-S] cluster scaffold protein carrying a second [4Fe-4S](2+) cluster] + N(6)-octanoyl-L-lysyl-[protein] + 2 oxidized [2Fe-2S]-[ferredoxin] + 2 S-adenosyl-L-methionine + 4 H(+) = [[Fe-S] cluster scaffold protein] + N(6)-[(R)-dihydrolipoyl]-L-lysyl-[protein] + 4 Fe(3+) + 2 hydrogen sulfide + 2 5'-deoxyadenosine + 2 L-methionine + 2 reduced [2Fe-2S]-[ferredoxin]. Its pathway is protein modification; protein lipoylation via endogenous pathway; protein N(6)-(lipoyl)lysine from octanoyl-[acyl-carrier-protein]: step 2/2. In terms of biological role, catalyzes the radical-mediated insertion of two sulfur atoms into the C-6 and C-8 positions of the octanoyl moiety bound to the lipoyl domains of lipoate-dependent enzymes, thereby converting the octanoylated domains into lipoylated derivatives. This chain is Lipoyl synthase, found in Pseudoalteromonas atlantica (strain T6c / ATCC BAA-1087).